The chain runs to 874 residues: UPF0182 protein Sfum_2137 (874 aa).

The next 7 helical transmembrane spans lie at 7-27, 57-77, 110-130, 171-191, 208-228, 252-272, and 283-303; these read WPLI…LSSL, IVFG…FWVA, SLWV…LPIF, RRLL…YLLE, LHLS…YVLQ, VIWA…FSMI, and PLVV…SAFL.

It belongs to the UPF0182 family.

It localises to the cell membrane. This is UPF0182 protein Sfum_2137 from Syntrophobacter fumaroxidans (strain DSM 10017 / MPOB).